Here is a 339-residue protein sequence, read N- to C-terminus: Ketol-acid reductoisomerase (NADP(+)) (339 aa).

Residues 1-182 form the KARI N-terminal Rossmann domain; it reads MRVYYDRDAD…GGGRAGIIET (182 aa). NADP(+) is bound by residues 24–27, arginine 48, serine 51, serine 53, and 83–86; these read YGSQ and DELQ. Histidine 108 is a catalytic residue. Glycine 134 contacts NADP(+). Residues 183–328 form the KARI C-terminal knotted domain; it reads TFREECETDL…AKLRDMMPWI (146 aa). 4 residues coordinate Mg(2+): aspartate 191, glutamate 195, glutamate 227, and glutamate 231. Serine 252 provides a ligand contact to substrate.

Belongs to the ketol-acid reductoisomerase family. The cofactor is Mg(2+).

The catalysed reaction is (2R)-2,3-dihydroxy-3-methylbutanoate + NADP(+) = (2S)-2-acetolactate + NADPH + H(+). It catalyses the reaction (2R,3R)-2,3-dihydroxy-3-methylpentanoate + NADP(+) = (S)-2-ethyl-2-hydroxy-3-oxobutanoate + NADPH + H(+). Its pathway is amino-acid biosynthesis; L-isoleucine biosynthesis; L-isoleucine from 2-oxobutanoate: step 2/4. It functions in the pathway amino-acid biosynthesis; L-valine biosynthesis; L-valine from pyruvate: step 2/4. Functionally, involved in the biosynthesis of branched-chain amino acids (BCAA). Catalyzes an alkyl-migration followed by a ketol-acid reduction of (S)-2-acetolactate (S2AL) to yield (R)-2,3-dihydroxy-isovalerate. In the isomerase reaction, S2AL is rearranged via a Mg-dependent methyl migration to produce 3-hydroxy-3-methyl-2-ketobutyrate (HMKB). In the reductase reaction, this 2-ketoacid undergoes a metal-dependent reduction by NADPH to yield (R)-2,3-dihydroxy-isovalerate. The chain is Ketol-acid reductoisomerase (NADP(+)) from Rhodopseudomonas palustris (strain ATCC BAA-98 / CGA009).